Here is a 462-residue protein sequence, read N- to C-terminus: Nuclear factor interleukin-3-regulated protein (462 aa).

Residue Lys-24 forms a Glycyl lysine isopeptide (Lys-Gly) (interchain with G-Cter in SUMO2) linkage. The bZIP domain maps to Asp-73 to Gln-136. The tract at residues Lys-79–Arg-95 is basic motif. The leucine-zipper stretch occupies residues Leu-99–Ile-106. Disordered stretches follow at residues Asp-189 to Arg-236 and Gly-254 to Val-303. Lys-214 is covalently cross-linked (Glycyl lysine isopeptide (Lys-Gly) (interchain with G-Cter in SUMO2)). Lys-219 participates in a covalent cross-link: Glycyl lysine isopeptide (Lys-Gly) (interchain with G-Cter in SUMO1); alternate. A Glycyl lysine isopeptide (Lys-Gly) (interchain with G-Cter in SUMO2); alternate cross-link involves residue Lys-219. Basic and acidic residues predominate over residues Ser-227–Arg-236. Residues Val-264 to Thr-274 are compositionally biased toward polar residues. At Ser-301 the chain carries Phosphoserine. Residues Lys-314, Lys-326, Lys-332, Lys-337, and Lys-350 each participate in a glycyl lysine isopeptide (Lys-Gly) (interchain with G-Cter in SUMO2) cross-link. Ser-353 carries the phosphoserine modification. Glycyl lysine isopeptide (Lys-Gly) (interchain with G-Cter in SUMO2) cross-links involve residues Lys-360, Lys-394, Lys-401, Lys-406, Lys-412, Lys-419, Lys-424, Lys-434, and Lys-448.

The protein belongs to the bZIP family. NFIL3 subfamily. Homodimer. Binds DNA as a dimer. Interacts with CRY2, DR1 and PER2. Interacts with NR0B2. Interacts with MYSM1.

Its subcellular location is the nucleus. Functionally, acts as a transcriptional regulator that recognizes and binds to the sequence 5'-[GA]TTA[CT]GTAA[CT]-3', a sequence present in many cellular and viral promoters. Represses transcription from promoters with activating transcription factor (ATF) sites. Represses promoter activity in osteoblasts. Represses transcriptional activity of PER1. Represses transcriptional activity of PER2 via the B-site on the promoter. Activates transcription from the interleukin-3 promoter in T-cells. Competes for the same consensus-binding site with PAR DNA-binding factors (DBP, HLF and TEF). Component of the circadian clock that acts as a negative regulator for the circadian expression of PER2 oscillation in the cell-autonomous core clock. Protects pro-B cells from programmed cell death. Represses the transcription of CYP2A5. Positively regulates the expression and activity of CES2 by antagonizing the repressive action of NR1D1 on CES2. Required for the development of natural killer cell precursors. The chain is Nuclear factor interleukin-3-regulated protein (NFIL3) from Bos taurus (Bovine).